The following is a 117-amino-acid chain: Ribonuclease P protein component 4 (117 aa).

Cysteine 63, cysteine 66, cysteine 92, and cysteine 95 together coordinate Zn(2+).

It belongs to the eukaryotic/archaeal RNase P protein component 4 family. Consists of a catalytic RNA component and at least 4 protein subunits. Forms a subcomplex with Rnp1 which stimulates the catalytic RNA. The cofactor is Zn(2+).

The protein localises to the cytoplasm. The enzyme catalyses Endonucleolytic cleavage of RNA, removing 5'-extranucleotides from tRNA precursor.. Functionally, part of ribonuclease P, a protein complex that generates mature tRNA molecules by cleaving their 5'-ends. The RNA is catalytic, but its KM for pre-tRNA is 170-fold decreased in the presence of the 4 known protein subunits (Rnp1-4). The protein subunits also decrease the amount of Mg(2+) needed for activity. The sequence is that of Ribonuclease P protein component 4 from Pyrococcus furiosus (strain ATCC 43587 / DSM 3638 / JCM 8422 / Vc1).